The following is a 490-amino-acid chain: Protein dead ringer homolog (490 aa).

The segment covering 1–33 (MVEDQRRQLMEEEDEERRLILEEQRRRMMRADR) has biased composition (basic and acidic residues). Disordered stretches follow at residues 1–77 (MVED…AHID) and 106–135 (ITQSPPLTNGSNHDNDHDPYLSHRAAHGGS). Residues 34–50 (DEEEEEEEEEEEEEREE) are compositionally biased toward acidic residues. Residues 51 to 76 (DDGRRSEDEMREDEPPGRRETSHAHI) show a composition bias toward basic and acidic residues. Residues 106 to 117 (ITQSPPLTNGSN) show a composition bias toward polar residues. One can recognise an ARID domain in the interval 202–294 (DSKRKEFLDD…YLYPYECEKK (93 aa)). Positions 298–369 (SPSELQSAID…PPRLSPSTSP (72 aa)) are disordered. Residues 316–325 (PSYHSPHMHP) are compositionally biased toward basic residues. Residues 389–479 (AAMLAELAER…GVLYPRGGTR (91 aa)) form the REKLES domain.

Its subcellular location is the nucleus. Transcription factor involved in skeletogenesis and oral ectoderm patterning. The polypeptide is Protein dead ringer homolog (dri) (Strongylocentrotus purpuratus (Purple sea urchin)).